Reading from the N-terminus, the 328-residue chain is Organic solute transporter alpha-like protein (328 aa).

Residues 1–44 (MNASENYFTMDPTENISQVLDQNRNNTNSLRTHPTVEEYYENMT) lie on the Extracellular side of the membrane. N-linked (GlcNAc...) asparagine glycans are attached at residues N2, N15, N25, and N42. A helical membrane pass occupies residues 45–65 (AFLSLAIFIASLLTILNISIF). At 66 to 84 (ATTVSRLRRHLDKPLLGPS) the chain is on the cytoplasmic side. The helical transmembrane segment at 85–105 (IMMVGLYPIISVAALVTILVP) threads the bilayer. A topological domain (extracellular) is located at residue Y106. Residues 107–127 (SWFICHTVMHVMFMVGGPVFR) traverse the membrane as a helical segment. Residues 128 to 177 (TLLFRYVGSEQNYVKETAGEAVQLNTPPCCCCCLCLPMVIPTKAKLCISR) are Cytoplasmic-facing. A helical transmembrane segment spans residues 178-198 (YMVWQMPFWQGSIMLVMNILY). Topologically, residues 199 to 208 (YRDIQLYRQV) are extracellular. A helical transmembrane segment spans residues 209–229 (MFFFIPFIVCSIVLGAWSLQI). Residues 230–247 (TVRMITKVRGDYQLRKKM) are Cytoplasmic-facing. A helical transmembrane segment spans residues 248 to 265 (FCLQLVVMLCKLQYLVLY). The Extracellular segment spans residues 266–287 (DQLDGIKMGGEYPINHTVYKQT). The N-linked (GlcNAc...) asparagine glycan is linked to N280. The helical transmembrane segment at 288 to 308 (IINILILVEMVLVSMMVQSAY) threads the bilayer. Residues 309 to 328 (RTPVQVQIDEVNKEKEVTRI) lie on the Cytoplasmic side of the membrane.

The protein belongs to the OST-alpha family.

Its subcellular location is the cell membrane. In terms of biological role, probable transporter. In Drosophila melanogaster (Fruit fly), this protein is Organic solute transporter alpha-like protein.